Here is a 559-residue protein sequence, read N- to C-terminus: MASRRILSSLLRSSSSRSTSKSSLIGSRNPRLLSPGPAHGAAPCGTLLGRVAEYSTSSPANSAAPSSAPAKDEGKKTYDYGGKGAIGRVCQVIGAIVDVRFEDQEGLPPIMTSLEVQDHPTRLVLEVSHHLGQNVVRTIAMDGTEGLVRGRKVLNTGAPITVPVGRATLGRIMNVLGEPIDERGEIKTEHYLPIHRDAPALVDLATGQEILATGIKVVDLLAPYQRGGKIGLFGGAGVGKTVLIMELINNVAKAHGGFSVFAGVGERTREGNDLYREMIESGVIKLGEKQSESKCALVYGQMNEPPGARARVGLTGLTVAEYFRDAEGQDVLLFIDNIFRFTQANSEVSALLGRIPSAVGYQPTLASDLGALQERITTTKKGSITSVQAIYVPADDLTDPAPATTFAHLDATTVLSRQISELGIYPAVDPLDSTSRMLSPHILGEEHYNTARGVQKVLQNYKNLQDIIAILGMDELSEDDKLTVARARKIQRFLSQPFHVAEIFTGAPGKYVDLKENINSFQGLLDGKYDDLSEQSFYMVGGIDEVVAKAEKIAKESAA.

Over residues Met1–Arg28 the composition is skewed to low complexity. Residues Met1–His39 form a disordered region. The N-terminal 54 residues, Met1–Tyr54, are a transit peptide targeting the mitochondrion. Ser62 is subject to Phosphoserine. Gly234–Thr241 provides a ligand contact to ATP.

This sequence belongs to the ATPase alpha/beta chains family. As to quaternary structure, F-type ATPases have 2 components, CF(1) - the catalytic core - and CF(0) - the membrane proton channel. CF(1) has five subunits: alpha(3), beta(3), gamma(1), delta(1), epsilon(1). CF(0) has three main subunits: a, b and c.

It is found in the mitochondrion. The protein resides in the mitochondrion inner membrane. The catalysed reaction is ATP + H2O + 4 H(+)(in) = ADP + phosphate + 5 H(+)(out). Its function is as follows. Mitochondrial membrane ATP synthase (F(1)F(0) ATP synthase or Complex V) produces ATP from ADP in the presence of a proton gradient across the membrane which is generated by electron transport complexes of the respiratory chain. F-type ATPases consist of two structural domains, F(1) - containing the extramembraneous catalytic core, and F(0) - containing the membrane proton channel, linked together by a central stalk and a peripheral stalk. During catalysis, ATP synthesis in the catalytic domain of F(1) is coupled via a rotary mechanism of the central stalk subunits to proton translocation. Subunits alpha and beta form the catalytic core in F(1). Rotation of the central stalk against the surrounding alpha(3)beta(3) subunits leads to hydrolysis of ATP in three separate catalytic sites on the beta subunits. This chain is ATP synthase subunit beta-3, mitochondrial, found in Arabidopsis thaliana (Mouse-ear cress).